We begin with the raw amino-acid sequence, 148 residues long: Ribonuclease H (148 aa).

An RNase H type-1 domain is found at 2 to 143 (TADIIYIYSD…ADVLANQGVL (142 aa)). Mg(2+) contacts are provided by aspartate 11, glutamate 49, aspartate 71, and aspartate 135.

The protein belongs to the RNase H family. As to quaternary structure, monomer. It depends on Mg(2+) as a cofactor.

The protein resides in the cytoplasm. The catalysed reaction is Endonucleolytic cleavage to 5'-phosphomonoester.. In terms of biological role, endonuclease that specifically degrades the RNA of RNA-DNA hybrids. The protein is Ribonuclease H of Thiobacillus denitrificans (strain ATCC 25259 / T1).